A 346-amino-acid polypeptide reads, in one-letter code: Acetyl-coenzyme A carboxylase carboxyl transferase subunit beta (346 aa).

The CoA carboxyltransferase N-terminal domain maps to 24–292; sequence LWIKCPKSGD…LPEVEPIAVA (269 aa). Positions 300-311 are enriched in acidic residues; sequence AEAEAAPDEVVE. The interval 300 to 346 is disordered; that stretch reads AEAEAAPDEVVEVEAPAVDEIVEEKPAATKAKPRSKAKSKAAPKTDE. The segment covering 330–340 has biased composition (basic residues); the sequence is AKPRSKAKSKA.

It belongs to the AccD/PCCB family. Acetyl-CoA carboxylase is a heterohexamer composed of biotin carboxyl carrier protein (AccB), biotin carboxylase (AccC) and two subunits each of ACCase subunit alpha (AccA) and ACCase subunit beta (AccD).

The protein resides in the cytoplasm. The enzyme catalyses N(6)-carboxybiotinyl-L-lysyl-[protein] + acetyl-CoA = N(6)-biotinyl-L-lysyl-[protein] + malonyl-CoA. It functions in the pathway lipid metabolism; malonyl-CoA biosynthesis; malonyl-CoA from acetyl-CoA: step 1/1. In terms of biological role, component of the acetyl coenzyme A carboxylase (ACC) complex. Biotin carboxylase (BC) catalyzes the carboxylation of biotin on its carrier protein (BCCP) and then the CO(2) group is transferred by the transcarboxylase to acetyl-CoA to form malonyl-CoA. The protein is Acetyl-coenzyme A carboxylase carboxyl transferase subunit beta of Hirschia baltica (strain ATCC 49814 / DSM 5838 / IFAM 1418).